We begin with the raw amino-acid sequence, 322 residues long: GATA transcription factor 8 (322 aa).

The tract at residues 93-168 is disordered; the sequence is TLVEKKEDSF…DKDRVKDNVC (76 aa). Residues 102–141 show a composition bias toward low complexity; sequence FSTNTDSSSSHSQFRSSSPVSVLESSSSSSQTTNTTSLVL. Residues 144–154 show a composition bias toward basic residues; it reads KHGRPRTKRPR. Residues 147-154 carry the Nuclear localization signal motif; sequence RPRTKRPR. The GATA-type zinc-finger motif lies at 225–279; it reads QYPLRKCMHCEVTKTPQWRLGPMGPKTLCNACGVRYKSGRLFPEYRPAASPTFTP.

The protein belongs to the type IV zinc-finger family. Class A subfamily.

The protein resides in the nucleus. In terms of biological role, transcriptional activator that specifically binds 5'-GATA-3' or 5'-GAT-3' motifs within gene promoters. May be involved in the regulation of some light-responsive genes. This is GATA transcription factor 8 (GATA8) from Arabidopsis thaliana (Mouse-ear cress).